The sequence spans 88 residues: Sec-independent protein translocase protein TatA (88 aa).

The chain crosses the membrane as a helical span at residues 1-21; sequence MGSIGWAQLLIIAVIVVLLFG. A disordered region spans residues 41–88; it reads KAMGDDSQTPPTNVDKTSNDADFAKSITEKQQPVAKAEESKSHEKEQG. The span at 46–56 shows a compositional bias: polar residues; it reads DSQTPPTNVDK. The span at 76-88 shows a compositional bias: basic and acidic residues; that stretch reads KAEESKSHEKEQG.

The protein belongs to the TatA/E family. In terms of assembly, the Tat system comprises two distinct complexes: a TatABC complex, containing multiple copies of TatA, TatB and TatC subunits, and a separate TatA complex, containing only TatA subunits. Substrates initially bind to the TatABC complex, which probably triggers association of the separate TatA complex to form the active translocon.

Its subcellular location is the cell inner membrane. Functionally, part of the twin-arginine translocation (Tat) system that transports large folded proteins containing a characteristic twin-arginine motif in their signal peptide across membranes. TatA could form the protein-conducting channel of the Tat system. This chain is Sec-independent protein translocase protein TatA, found in Yersinia pestis.